A 189-amino-acid chain; its full sequence is Pyridoxal 5'-phosphate synthase subunit PdxT (189 aa).

Residue 52-54 coordinates L-glutamine; that stretch reads GES. Residue Cys-81 is the Nucleophile of the active site. Residues Arg-108 and 136–137 each bind L-glutamine; that span reads IR. Residues His-172 and Glu-174 each act as charge relay system in the active site.

Belongs to the glutaminase PdxT/SNO family. In terms of assembly, in the presence of PdxS, forms a dodecamer of heterodimers. Only shows activity in the heterodimer.

The catalysed reaction is aldehydo-D-ribose 5-phosphate + D-glyceraldehyde 3-phosphate + L-glutamine = pyridoxal 5'-phosphate + L-glutamate + phosphate + 3 H2O + H(+). The enzyme catalyses L-glutamine + H2O = L-glutamate + NH4(+). It participates in cofactor biosynthesis; pyridoxal 5'-phosphate biosynthesis. Catalyzes the hydrolysis of glutamine to glutamate and ammonia as part of the biosynthesis of pyridoxal 5'-phosphate. The resulting ammonia molecule is channeled to the active site of PdxS. This is Pyridoxal 5'-phosphate synthase subunit PdxT from Haemophilus ducreyi (strain 35000HP / ATCC 700724).